We begin with the raw amino-acid sequence, 523 residues long: Acetyl-coenzyme A carboxylase carboxyl transferase subunit beta, chloroplastic (523 aa).

The CoA carboxyltransferase N-terminal domain occupies 224–523 (FWVICENCHK…FVPSNQNSIK (300 aa)). Zn(2+)-binding residues include Cys228, Cys231, Cys247, and Cys250. The C4-type zinc-finger motif lies at 228–250 (CENCHKFNYKRLFKSKMNICEEC).

This sequence belongs to the AccD/PCCB family. As to quaternary structure, acetyl-CoA carboxylase is a heterohexamer composed of biotin carboxyl carrier protein, biotin carboxylase and 2 subunits each of ACCase subunit alpha and ACCase plastid-coded subunit beta (accD). Zn(2+) is required as a cofactor.

The protein resides in the plastid. The protein localises to the chloroplast stroma. The enzyme catalyses N(6)-carboxybiotinyl-L-lysyl-[protein] + acetyl-CoA = N(6)-biotinyl-L-lysyl-[protein] + malonyl-CoA. Its pathway is lipid metabolism; malonyl-CoA biosynthesis; malonyl-CoA from acetyl-CoA: step 1/1. Component of the acetyl coenzyme A carboxylase (ACC) complex. Biotin carboxylase (BC) catalyzes the carboxylation of biotin on its carrier protein (BCCP) and then the CO(2) group is transferred by the transcarboxylase to acetyl-CoA to form malonyl-CoA. The protein is Acetyl-coenzyme A carboxylase carboxyl transferase subunit beta, chloroplastic of Cucumis sativus (Cucumber).